Here is a 744-residue protein sequence, read N- to C-terminus: MSEVANSTSPVQDGADANGAQINTNVPAASGDAPTPTTAAQQAHQNSASLYVGELDPSVTEAMLFELFSSIGQVASIRVCRDAVTRRSLGYAYVNYNSSEDGEKALEELNYTVIKGKPCRIMWSQRDPALRKTGQGNVFIKNLDHAIDNKALHDTFAAFGNILSCKVAQDELGNSKGYGFVHYETAEAANNAIKHVNGMLLNEKKVFVGHHIPKKERMSKFEEMKANFTNIYVKNIDLDVTDEDFRELFEKHGDITSASIARDDQGKSRGFGFVNYIRHEAAAVAVDHLNDIEFKGQKLYVGRAQKKHEREEELRKQYEAARLEKQSKYQGVNLYIKNLNDDVDDEKLRDMFTPFGTITSAKVILRDEEKKDEEEKEVKEEKKEDEKKEDEEAKEGSSSEQNGEDTKAGDKVTIKGEKKILGKSKGFGFVCFSNPDEATKAVTEMNQKMIEGKPLYVALAQRKDVRKNQLEATIQARNQLRMQQQQQQQFGGIPQMFIAPGQQPMMYPPGARGQMPFPAGMPGAQGGRGAGFPGGMPGQQGGRGGPNAQQMPPMYMPPGMAPGAFPPGPYMNQQYMQLAQAAQQAMGGRGGRGGPMPGMPGMPQAQIAGGPGIRGGQGGFPQGGRGAPGGRGQPPMPGFPQGGRPGGPGVDMSVLSAAAPGQQKQMLGEALYPKIHEMQPELAGKITGMLLEMDNSELINLTADESALRAKVDEAMSVYDEYVKNKEGDGEKEAPKEESKEEKA.

A compositionally biased stretch (polar residues) spans Met1 to Val11. Residues Met1–Gln42 are disordered. Over residues Ala33–Gln42 the composition is skewed to low complexity. 4 consecutive RRM domains span residues Ala48–Arg126, Gly136–Pro213, Thr229–Lys306, and Val332–Arg462. Disordered regions lie at residues Glu368 to Lys411, Gly527 to Gln550, Ile607 to Asp651, and Val723 to Ala744. Residues Lys376–Ser397 are compositionally biased toward basic and acidic residues. Gly residues-rich tracts occupy residues Gly527–Gly545, Gly609–Gly632, and Pro640–Gly649. Residues Gly647 to Lys724 enclose the PABC domain.

Belongs to the polyadenylate-binding protein type-1 family.

The protein resides in the cytoplasm. The protein localises to the nucleus. Its function is as follows. Binds the poly(A) tail of mRNA. Appears to be an important mediator of the multiple roles of the poly(A) tail in mRNA biogenesis, stability and translation. In the nucleus, involved in both mRNA cleavage and polyadenylation. Is also required for efficient mRNA export to the cytoplasm. Acts in concert with a poly(A)-specific nuclease (PAN) to affect poly(A) tail shortening, which may occur concomitantly with either nucleocytoplasmic mRNA transport or translational initiation. In the cytoplasm, stimulates translation initiation and regulates mRNA decay through translation termination-coupled poly(A) shortening, probably mediated by PAN. This chain is Polyadenylate-binding protein, cytoplasmic and nuclear (PAB1), found in Phaeosphaeria nodorum (strain SN15 / ATCC MYA-4574 / FGSC 10173) (Glume blotch fungus).